Here is an 849-residue protein sequence, read N- to C-terminus: MANILRKIIENDKGEIKKLEKTAKKVESYADAMAALSDEELQAKTEEFKQRYQNGESLDQLLPEAFAVVREGAKRVLGLFPYRVQIMGGIVLHHGDVAEMRTGEGKTLTATMPVYLNAISGEGVHVITVNEYLSERDATEMGELYSWLGLSVGINLSSKSPAEKREAYNCDITYSTSSEVGFDYLRDNMVVRKENMVQRPLNFALVDEVDSVLIDEARTPLIVSGPVSSETNQLYHRADAFVKTLTEDDYAIDIPTKTIGLNDSGIDKAEEFFNLENLYDIDNVALTHYIDNALRANYIMLRDIDYVVSPEQEILIVDQFTGRTMEGRRFSDGLHQAIEAKEGVPVQEETKTSASITYQNMFRMYKKLSGMTGTGKTEEDEFREIYNMRVIPIPTNRPIQRIDHDDLLYSTLDAKFRAVVQDVKRRYEKGQPVLIGTVAVETSDLISKMLVDAGIPHEVLNAKNHEKEAHIIMNAGQRGAVTIATNMAGRGTDIKLGEGVLELGGLCVIGTERHESRRIDNQLRGRSGRQGDPGESQFYLSLEDELMRRFGSDRIKHVLERLNADDEDIVIKSRMLTRQVESAQKRVEGNNYDTRKQVLQYDDVMREQREIIYAERYDVITAERDLEPEIKAMIKRTINRTVDGHSRNDQEEALKGILNFARQALVPEDAISLEDLKEVGEVTKRSVNYDAIKVYLTELADNVYDRQIKKLRSEEAIREFQKVLILMVVDNKWTDHIDALDQLRNAVGMRGYAQNNPIVEYQSESFKMFQDMIGAIEYDVTRTMMKAQIHEQSREHVNERVSTTATGNIQAHQADANGQEIDFSKVGRNDFCPCGSGKKFKNCHGRKQF.

Residues Gln-85, 103–107 (GEGKT), and Asp-493 contribute to the ATP site. Zn(2+) is bound by residues Cys-832, Cys-834, Cys-843, and His-844.

It belongs to the SecA family. In terms of assembly, monomer and homodimer. Part of the essential Sec protein translocation apparatus which comprises SecA, SecYEG and auxiliary proteins SecDF. Other proteins may also be involved. Zn(2+) is required as a cofactor.

The protein localises to the cell membrane. The protein resides in the cytoplasm. It catalyses the reaction ATP + H2O + cellular proteinSide 1 = ADP + phosphate + cellular proteinSide 2.. Functionally, part of the Sec protein translocase complex. Interacts with the SecYEG preprotein conducting channel. Has a central role in coupling the hydrolysis of ATP to the transfer of proteins into and across the cell membrane, serving as an ATP-driven molecular motor driving the stepwise translocation of polypeptide chains across the membrane. This chain is Protein translocase subunit SecA, found in Streptococcus thermophilus (strain ATCC BAA-250 / LMG 18311).